The chain runs to 321 residues: PIH1 domain-containing protein 2 (321 aa).

This sequence belongs to the PIH1 family.

The protein is PIH1 domain-containing protein 2 (pih1d2) of Xenopus tropicalis (Western clawed frog).